A 250-amino-acid polypeptide reads, in one-letter code: 5'-nucleotidase SurE (250 aa).

A divalent metal cation-binding residues include Asp8, Asp9, Ser39, and Asn91.

Belongs to the SurE nucleotidase family. Requires a divalent metal cation as cofactor.

Its subcellular location is the cytoplasm. The catalysed reaction is a ribonucleoside 5'-phosphate + H2O = a ribonucleoside + phosphate. Functionally, nucleotidase that shows phosphatase activity on nucleoside 5'-monophosphates. The polypeptide is 5'-nucleotidase SurE (Leptospira interrogans serogroup Icterohaemorrhagiae serovar copenhageni (strain Fiocruz L1-130)).